We begin with the raw amino-acid sequence, 150 residues long: Heavy metal-associated isoprenylated plant protein 24 (150 aa).

In terms of domain architecture, HMA spans Q26–E89. C37 and C40 together coordinate a metal cation. C147 carries the cysteine methyl ester modification. A lipid anchor (S-farnesyl cysteine) is attached at C147. Residues A148 to M150 constitute a propeptide, removed in mature form.

This sequence belongs to the HIPP family. In terms of assembly, interacts with ZHD11/HB29.

In terms of biological role, heavy-metal-binding protein. This Arabidopsis thaliana (Mouse-ear cress) protein is Heavy metal-associated isoprenylated plant protein 24.